Reading from the N-terminus, the 353-residue chain is D-alanine--D-alanine ligase A (353 aa).

In terms of domain architecture, ATP-grasp spans 141 to 346 (KRLVNEAGLS…YPEIINRLVA (206 aa)). ATP is bound at residue 169 to 224 (EQALGLPIFIKPARQGSSVGVHKVVTEADYQAAMSDGFTYDDKLLAEEFIQAREVE). 3 residues coordinate Mg(2+): aspartate 300, glutamate 313, and asparagine 315.

The protein belongs to the D-alanine--D-alanine ligase family. The cofactor is Mg(2+). It depends on Mn(2+) as a cofactor.

It localises to the cytoplasm. It carries out the reaction 2 D-alanine + ATP = D-alanyl-D-alanine + ADP + phosphate + H(+). It functions in the pathway cell wall biogenesis; peptidoglycan biosynthesis. Its function is as follows. Cell wall formation. In Brucella suis biovar 1 (strain 1330), this protein is D-alanine--D-alanine ligase A.